The sequence spans 165 residues: Anaerobic nitrite reductase GLB1 (165 aa).

The region spanning 12-162 (VFGEEQEALV…LVAAIKREMK (151 aa)) is the Globin domain. A Homodimerization motif is present at residues 45 to 49 (EIAPS). Ser55, Lys69, His73, Arg103, Thr107, and His108 together coordinate heme b. Positions 115–127 (DGHFEVTGFALLE) match the Homodimerization motif.

Belongs to the plant globin family. As to quaternary structure, homodimer. It depends on heme b as a cofactor. As to expression, in vegetative but not in embryonic organs.

It is found in the cytoplasm. It localises to the nucleus. The enzyme catalyses Fe(III)-heme b-[protein] + nitric oxide + H2O = Fe(II)-heme b-[protein] + nitrite + 2 H(+). Functionally, phytoglobin that reduces nitrite to nitric oxide (NO) under anoxic conditions (e.g. during flooding or in waterlogged soil). May not function as an oxygen storage or transport protein. Has an unusually high affinity for O(2) through an hexacoordinate heme iron because of a very low dissociation constant. This Zea mays subsp. parviglumis (Balsas teosinte) protein is Anaerobic nitrite reductase GLB1 (HB).